The chain runs to 574 residues: Uric acid-xanthine permease (574 aa).

A disordered region spans residues 1-20 (MDNSIHSTDGPDSVIPNSNP). Helical transmembrane passes span 77 to 97 (LLAFILGLQHALAMLAGVVTP), 111 to 131 (LQQYLVSTSLIVCGLLSMVQI), 141 to 161 (YYIGSGVLSVMGVSFSIISVA), 188 to 209 (AYGALIGTSACCALVEILLAFV), 217 to 237 (IFPPIVTGPTVMLIGISLIGT), 264 to 284 (LPWGSPEFIGLGFLVFVSIIL), 296 to 315 (CSVVIGLLVGCIVAAACGYF), 338 to 361 (VYGPMVLPIIAVFIICACECIGDV), 427 to 447 (CCLILIVAGIFAKFAAAIVAI), 451 to 471 (VMGGMKTFLFASVVISGQAIV), 482 to 502 (FILTASMALGYGATLVPTWFG), and 522 to 542 (LVLETGFAVTAFVAMLLNAIM). Positions 555-574 (MPVSAHDNRDGEAEYQSKQA) are disordered. A Glycyl lysine isopeptide (Lys-Gly) (interchain with G-Cter in ubiquitin) cross-link involves residue Lys572.

The protein belongs to the nucleobase:cation symporter-2 (NCS2) (TC 2.A.40) family. Post-translationally, ubiquitinated by hulA. Ubiquitination leads to internalization, sorting into the endosomal pathway to the vacuolar lumen where uapA is eventually degraded.

It localises to the cell membrane. Uric acid-xanthine transporter. The protein is Uric acid-xanthine permease (uapA) of Emericella nidulans (strain FGSC A4 / ATCC 38163 / CBS 112.46 / NRRL 194 / M139) (Aspergillus nidulans).